The sequence spans 389 residues: Phosphopentomutase (389 aa).

Mn(2+) is bound by residues Asp9, Asp282, His287, Asp323, His324, and His335.

The protein belongs to the phosphopentomutase family. Mn(2+) is required as a cofactor.

The protein resides in the cytoplasm. The catalysed reaction is 2-deoxy-alpha-D-ribose 1-phosphate = 2-deoxy-D-ribose 5-phosphate. It catalyses the reaction alpha-D-ribose 1-phosphate = D-ribose 5-phosphate. It participates in carbohydrate degradation; 2-deoxy-D-ribose 1-phosphate degradation; D-glyceraldehyde 3-phosphate and acetaldehyde from 2-deoxy-alpha-D-ribose 1-phosphate: step 1/2. Isomerase that catalyzes the conversion of deoxy-ribose 1-phosphate (dRib-1-P) and ribose 1-phosphate (Rib-1-P) to deoxy-ribose 5-phosphate (dRib-5-P) and ribose 5-phosphate (Rib-5-P), respectively. The chain is Phosphopentomutase from Pseudothermotoga lettingae (strain ATCC BAA-301 / DSM 14385 / NBRC 107922 / TMO) (Thermotoga lettingae).